Here is an 802-residue protein sequence, read N- to C-terminus: Copper-exporting P-type ATPase (802 aa).

HMA domains are found at residues 5–70 (KKTT…YGVA) and 72–138 (ETVE…YDAS). Cu(+) is bound by residues cysteine 16, cysteine 19, cysteine 83, and cysteine 86. Transmembrane regions (helical) follow at residues 161-181 (LIISAVLSLPLLMLMFVHLFN), 192-212 (WFQFILATPVQFIIGWQFYVG), 224-244 (MDVLVAVGTSAAYFYSIYEMV), 256-276 (LYFETSAVLITLILFGKYLEA), 411-431 (YFVPIVVGIALLTFIVWITLV), and 438-458 (PALVASISVLVIACPCALGLA). Aspartate 495 (4-aspartylphosphate intermediate) is an active-site residue. Mg(2+) is bound by residues aspartate 690 and aspartate 694. Helical transmembrane passes span 748–767 (LFWAFGYNIAGIPIAALGLL) and 771–790 (VAGAAMALSSVSVVTNALRL).

Belongs to the cation transport ATPase (P-type) (TC 3.A.3) family. Type IB subfamily.

The protein localises to the cell membrane. It catalyses the reaction Cu(+)(in) + ATP + H2O = Cu(+)(out) + ADP + phosphate + H(+). Involved in copper export. The chain is Copper-exporting P-type ATPase (copA) from Staphylococcus aureus (strain MW2).